A 489-amino-acid chain; its full sequence is Protein nucleotidyltransferase YdiU (489 aa).

The ATP site is built by glycine 88, glycine 90, arginine 91, lysine 111, aspartate 123, glycine 124, arginine 174, and arginine 181. Aspartate 250 (proton acceptor) is an active-site residue. Residues asparagine 251 and aspartate 260 each contribute to the Mg(2+) site. Aspartate 260 is a binding site for ATP.

The protein belongs to the SELO family. Requires Mg(2+) as cofactor. Mn(2+) is required as a cofactor.

It carries out the reaction L-seryl-[protein] + ATP = 3-O-(5'-adenylyl)-L-seryl-[protein] + diphosphate. The catalysed reaction is L-threonyl-[protein] + ATP = 3-O-(5'-adenylyl)-L-threonyl-[protein] + diphosphate. The enzyme catalyses L-tyrosyl-[protein] + ATP = O-(5'-adenylyl)-L-tyrosyl-[protein] + diphosphate. It catalyses the reaction L-histidyl-[protein] + UTP = N(tele)-(5'-uridylyl)-L-histidyl-[protein] + diphosphate. It carries out the reaction L-seryl-[protein] + UTP = O-(5'-uridylyl)-L-seryl-[protein] + diphosphate. The catalysed reaction is L-tyrosyl-[protein] + UTP = O-(5'-uridylyl)-L-tyrosyl-[protein] + diphosphate. Its function is as follows. Nucleotidyltransferase involved in the post-translational modification of proteins. It can catalyze the addition of adenosine monophosphate (AMP) or uridine monophosphate (UMP) to a protein, resulting in modifications known as AMPylation and UMPylation. The chain is Protein nucleotidyltransferase YdiU from Vibrio cholerae serotype O1 (strain ATCC 39315 / El Tor Inaba N16961).